We begin with the raw amino-acid sequence, 188 residues long: Probable thymidylate kinase (188 aa).

11–18 (GIDGSGKT) contacts ATP.

The protein belongs to the thymidylate kinase family.

The catalysed reaction is dTMP + ATP = dTDP + ADP. The chain is Probable thymidylate kinase (tmk) from Methanocaldococcus jannaschii (strain ATCC 43067 / DSM 2661 / JAL-1 / JCM 10045 / NBRC 100440) (Methanococcus jannaschii).